Reading from the N-terminus, the 291-residue chain is ATP synthase gamma chain (291 aa).

The protein belongs to the ATPase gamma chain family. F-type ATPases have 2 components, CF(1) - the catalytic core - and CF(0) - the membrane proton channel. CF(1) has five subunits: alpha(3), beta(3), gamma(1), delta(1), epsilon(1). CF(0) has three main subunits: a, b and c.

It is found in the cell inner membrane. In terms of biological role, produces ATP from ADP in the presence of a proton gradient across the membrane. The gamma chain is believed to be important in regulating ATPase activity and the flow of protons through the CF(0) complex. The chain is ATP synthase gamma chain from Neisseria meningitidis serogroup A / serotype 4A (strain DSM 15465 / Z2491).